We begin with the raw amino-acid sequence, 408 residues long: Serine/threonine transporter SstT (408 aa).

The next 9 helical transmembrane spans lie at 14 to 34, 43 to 63, 83 to 103, 143 to 163, 181 to 201, 219 to 239, 247 to 269, 290 to 310, and 332 to 352; these read GNLI…GIFS, IFGA…VFIL, IIFL…SISF, ALSS…GFAL, VLKI…GLVA, LIIL…LIVF, YPLI…SSAA, ISIP…IAIL, and VLAA…LLLI.

Belongs to the dicarboxylate/amino acid:cation symporter (DAACS) (TC 2.A.23) family.

Its subcellular location is the cell inner membrane. It carries out the reaction L-serine(in) + Na(+)(in) = L-serine(out) + Na(+)(out). The catalysed reaction is L-threonine(in) + Na(+)(in) = L-threonine(out) + Na(+)(out). Its function is as follows. Involved in the import of serine and threonine into the cell, with the concomitant import of sodium (symport system). This is Serine/threonine transporter SstT from Campylobacter lari (strain RM2100 / D67 / ATCC BAA-1060).